The primary structure comprises 245 residues: tRNA pseudouridine synthase A 1 (245 aa).

Catalysis depends on Asp-53, which acts as the Nucleophile. Tyr-111 serves as a coordination point for substrate.

It belongs to the tRNA pseudouridine synthase TruA family. In terms of assembly, homodimer.

The catalysed reaction is uridine(38/39/40) in tRNA = pseudouridine(38/39/40) in tRNA. In terms of biological role, formation of pseudouridine at positions 38, 39 and 40 in the anticodon stem and loop of transfer RNAs. This Clostridium tetani (strain Massachusetts / E88) protein is tRNA pseudouridine synthase A 1.